Consider the following 798-residue polypeptide: Heterogeneous nuclear ribonucleoprotein U (798 aa).

Residue Ser-2 is modified to N-acetylserine. Residue Ser-4 is modified to Phosphoserine. An SAP domain is found at Val-8 to Leu-42. N6-acetyllysine occurs at positions 17 and 21. Residues Ala-41–Arg-229 form a disordered region. Position 58 is a phosphoserine (Ser-58). Composition is skewed to low complexity over residues Ala-71–Gly-80 and Glu-103–Gly-113. 2 stretches are compositionally biased toward acidic residues: residues Ala-114–Asp-128 and Glu-134–Gly-147. Residues Gly-153 to Gln-169 are compositionally biased toward low complexity. Lys-179 bears the N6-acetyllysine mark. Ser-180 bears the ADP-ribosylserine mark. The span at Ala-192–Ala-203 shows a compositional bias: low complexity. Residues Gly-207–Arg-229 are compositionally biased toward basic and acidic residues. Arg-229 is modified (citrulline). Lys-239 is subject to N6-acetyllysine; alternate. Lys-239 participates in a covalent cross-link: Glycyl lysine isopeptide (Lys-Gly) (interchain with G-Cter in SUMO1); alternate. Residue Lys-239 forms a Glycyl lysine isopeptide (Lys-Gly) (interchain with G-Cter in SUMO2); alternate linkage. At Tyr-240 the chain carries Phosphotyrosine. Phosphoserine is present on residues Ser-241 and Ser-245. Residues Arg-242–Lys-438 enclose the B30.2/SPRY domain. Thr-260 carries the post-translational modification Phosphothreonine. An N6-acetyllysine modification is found at Lys-326. The interval Pro-462 to Glu-646 is ATPase domain. A Glycyl lysine isopeptide (Lys-Gly) (interchain with G-Cter in SUMO2) cross-link involves residue Lys-469. Residue Gly-478 to Thr-485 participates in ATP binding. Lys-490 and Lys-498 each carry N6-acetyllysine; alternate. Residues Lys-490 and Lys-498 each participate in a glycyl lysine isopeptide (Lys-Gly) (interchain with G-Cter in SUMO2); alternate cross-link. Phosphothreonine is present on Thr-506. A Glycyl lysine isopeptide (Lys-Gly) (interchain with G-Cter in SUMO2) cross-link involves residue Lys-510. Lys-525 bears the N6-acetyllysine mark. Lys-539 carries the post-translational modification N6-acetyllysine; alternate. Lys-539 participates in a covalent cross-link: Glycyl lysine isopeptide (Lys-Gly) (interchain with G-Cter in SUMO2); alternate. A Glycyl lysine isopeptide (Lys-Gly) (interchain with G-Cter in SUMO2) cross-link involves residue Lys-548. Position 556 is a phosphothreonine (Thr-556). Glycyl lysine isopeptide (Lys-Gly) (interchain with G-Cter in SUMO2) cross-links involve residues Lys-583 and Lys-600. Positions Glu-585 to Lys-600 are actin-binding. Position 609 is an N6-acetyllysine; alternate (Lys-609). Residue Lys-609 forms a Glycyl lysine isopeptide (Lys-Gly) (interchain with G-Cter in SUMO2); alternate linkage. Residues Asp-624 to Leu-651 are a coiled coil. Residues Lys-638 and Lys-644 each participate in a glycyl lysine isopeptide (Lys-Gly) (interchain with G-Cter in SUMO2) cross-link. The segment covering Glu-645–Gln-657 has biased composition (basic and acidic residues). Residues Glu-645–Pro-727 form a disordered region. Arg-676 bears the Omega-N-methylarginine mark. The segment covering Gly-684–Gly-702 has biased composition (gly residues). The RNA-binding RGG-box stretch occupies residues Met-688–Arg-713. 3 positions are modified to asymmetric dimethylarginine: Arg-689, Arg-694, and Arg-701. Arg-707 and Arg-713 each carry asymmetric dimethylarginine; alternate. Residues Arg-707 and Arg-713 each carry the omega-N-methylarginine; alternate modification. Residues Arg-713 to Gly-723 show a composition bias toward gly residues. Arg-728 and Arg-735 each carry asymmetric dimethylarginine. The disordered stretch occupies residues Asn-743–Ser-772. Residue Lys-787 is modified to N6-acetyllysine; alternate. Residue Lys-787 forms a Glycyl lysine isopeptide (Lys-Gly) (interchain with G-Cter in SUMO2); alternate linkage.

As to quaternary structure, oligomer (via ATPase domain and RNA-binding RGG-box region); oligomerization occurs upon ATP-binding in a chromatin-associated RNAs (caRNAs)- and transcription-dependent manner and is required for chromatin decompaction. ATP hydrolysis is required to cycle from an oligomeric to monomeric state to compact chromatin. Component of the coding region determinant (CRD)-mediated complex, composed of DHX9, HNRNPU, IGF2BP1, SYNCRIP and YBX1. Identified in the spliceosome C complex. Identified in a IGF2BP1-dependent mRNP granule complex containing untranslated mRNAs. Associates with heterogeneous nuclear ribonucleoprotein (hnRNP) particles. Associates (via middle region) with the C-terminal domain (CTD) RNA polymerase II (Pol II) holoenzyme; this association occurs in a RNA-independent manner. Associates (via middle region) with the core-TFIIH basal transcription factor complex; this association inhibits the CTD phosphorylation of RNA polymerase II holoenzyme by down-regulating TFIIH kinase activity. Associates with the telomerase holoenzyme complex. Associates with spindle microtubules (MTs) in a TPX2-dependent manner. Interacts (via C-terminus) with actin; this interaction is direct and mediates association with the phosphorylated CTD of RNA polymerase II and is disrupted in presence of the long non-coding H19 RNA. Interacts with AURKA. Interacts (via C-terminus) with CBX5; this interaction is, at least in part, RNA-dependent. Interacts with CR2. Interacts with CRY1. Interacts (via C-terminus) with EP300; this interaction enhances DNA-binding to nuclear scaffold/matrix attachment region (S/MAR) elements. Interacts with ERBB4. Interacts with GEMIN5. Interacts with IGF2BP1. Interacts with IGF2BP2 and IGF2BP3. Interacts with NCL; this interaction occurs during mitosis. Interacts (via C-terminus) with NR3C1 (via C-terminus). Interacts with PLK1; this interaction induces phosphorylation of HNRNPU at Ser-58 in mitosis. Interacts with POU3F4. Interacts with SMARCA4; this interaction occurs in embryonic stem cells and stimulates global Pol II-mediated transcription. Interacts (via C-terminus) with TOP2A; this interaction protects the topoisomerase TOP2A from degradation and positively regulates the relaxation of supercoiled DNA by TOP2A in a RNA-dependent manner. Interacts with TPX2; this interaction recruits HNRNPU to spindle microtubules (MTs). Interacts with UBQLN2. Interacts (via RNA-binding RGG-box region) with ZBTB7B; the interaction facilitates the recruitment of long non-coding RNA Blnc1 by ZBTB7B. Interacts with ERCC6. In terms of processing, cleaved at Asp-94 by CASP3 during T-cell apoptosis, resulting in a loss of DNA- and chromatin-binding activities. Post-translationally, extensively phosphorylated. Phosphorylated on Ser-58 by PLK1 and dephosphorylated by protein phosphatase 2A (PP2A) in mitosis. Arg-707 and Arg-713 are dimethylated, probably to asymmetric dimethylarginine. In terms of processing, citrullinated by PADI4.

The protein localises to the nucleus. The protein resides in the nucleus matrix. It is found in the chromosome. It localises to the nucleus speckle. Its subcellular location is the cytoplasm. The protein localises to the cytoskeleton. The protein resides in the microtubule organizing center. It is found in the centrosome. It localises to the centromere. Its subcellular location is the kinetochore. The protein localises to the spindle. The protein resides in the spindle pole. It is found in the midbody. It localises to the cell surface. Its subcellular location is the cytoplasmic granule. DNA- and RNA-binding protein involved in several cellular processes such as nuclear chromatin organization, telomere-length regulation, transcription, mRNA alternative splicing and stability, Xist-mediated transcriptional silencing and mitotic cell progression. Plays a role in the regulation of interphase large-scale gene-rich chromatin organization through chromatin-associated RNAs (caRNAs) in a transcription-dependent manner, and thereby maintains genomic stability. Required for the localization of the long non-coding Xist RNA on the inactive chromosome X (Xi) and the subsequent initiation and maintenance of X-linked transcriptional gene silencing during X-inactivation. Required for the topoisomerase TOP2A protein stability and activity in a RNA-dependent manner. Plays a role as a RNA polymerase II (Pol II) holoenzyme transcription regulator. Promotes transcription initiation by direct association with the core-TFIIH basal transcription factor complex for the assembly of a functional pre-initiation complex with Pol II in a actin-dependent manner. Blocks Pol II transcription elongation activity by inhibiting the C-terminal domain (CTD) phosphorylation of Pol II and dissociates from Pol II pre-initiation complex prior to productive transcription elongation. Positively regulates CBX5-induced transcriptional gene silencing and retention of CBX5 in the nucleus. Negatively regulates glucocorticoid-mediated transcriptional activation. Key regulator of transcription initiation and elongation in embryonic stem cells upon leukemia inhibitory factor (LIF) signaling. Involved in the long non-coding RNA H19-mediated Pol II transcriptional repression. Participates in the circadian regulation of the core clock component BMAL1 transcription. Plays a role in the regulation of telomere length. Plays a role as a global pre-mRNA alternative splicing modulator by regulating U2 small nuclear ribonucleoprotein (snRNP) biogenesis. Plays a role in mRNA stability. Component of the CRD-mediated complex that promotes MYC mRNA stabilization. Enhances the expression of specific genes, such as tumor necrosis factor TNFA, by regulating mRNA stability, possibly through binding to the 3'-untranslated region (UTR). Plays a role in mitotic cell cycle regulation. Involved in the formation of stable mitotic spindle microtubules (MTs) attachment to kinetochore, spindle organization and chromosome congression. Phosphorylation at Ser-58 by PLK1 is required for chromosome alignement and segregation and progression through mitosis. Also contributes to the targeting of AURKA to mitotic spindle MTs. Binds to double- and single-stranded DNA and RNA, poly(A), poly(C) and poly(G) oligoribonucleotides. Binds to chromatin-associated RNAs (caRNAs). Associates with chromatin to scaffold/matrix attachment region (S/MAR) elements in DNA. Associates with chromatin in a chromatin-associated RNAs (caRNAs)-dependent manner. Binds to the Xist RNA. Binds the long non-coding H19 RNA. Binds to SMN1/2 pre-mRNAs at G/U-rich regions. Binds to small nuclear RNAs (snRNAs). Binds to the 3'-UTR of TNFA mRNA. Binds (via RNA-binding RGG-box region) to the long non-coding Xist RNA; this binding is direct and bridges the Xist RNA and the inactive chromosome X (Xi). Also negatively regulates embryonic stem cell differentiation upon LIF signaling. Required for embryonic development. Binds to brown fat long non-coding RNA 1 (Blnc1); facilitates the recruitment of Blnc1 by ZBTB7B required to drive brown and beige fat development and thermogenesis. In Rattus norvegicus (Rat), this protein is Heterogeneous nuclear ribonucleoprotein U.